Here is a 157-residue protein sequence, read N- to C-terminus: MEKFPMTPRGFEKLKEELRWRQQSERPRIIEAIAEARAHGDLSENAEYHAAKEAQSLNEGRINELEDLVARAEVIDVSKLTGDRIKFGATVTMIDEDTEEEKIYQIVGDQEADVKEGRISISSPIARALIGKGEGDTIEVNAPGGSRSYEIIALKFV.

Belongs to the GreA/GreB family.

In terms of biological role, necessary for efficient RNA polymerase transcription elongation past template-encoded arresting sites. The arresting sites in DNA have the property of trapping a certain fraction of elongating RNA polymerases that pass through, resulting in locked ternary complexes. Cleavage of the nascent transcript by cleavage factors such as GreA or GreB allows the resumption of elongation from the new 3'terminus. GreA releases sequences of 2 to 3 nucleotides. The protein is Transcription elongation factor GreA of Brucella abortus (strain S19).